Reading from the N-terminus, the 253-residue chain is Hydroxyacylglutathione hydrolase (253 aa).

Zn(2+)-binding residues include His54, His56, Asp58, His59, His112, Asp131, and His169.

Belongs to the metallo-beta-lactamase superfamily. Glyoxalase II family. As to quaternary structure, monomer. Zn(2+) serves as cofactor.

The enzyme catalyses an S-(2-hydroxyacyl)glutathione + H2O = a 2-hydroxy carboxylate + glutathione + H(+). It functions in the pathway secondary metabolite metabolism; methylglyoxal degradation; (R)-lactate from methylglyoxal: step 2/2. Functionally, thiolesterase that catalyzes the hydrolysis of S-D-lactoyl-glutathione to form glutathione and D-lactic acid. This is Hydroxyacylglutathione hydrolase from Bartonella tribocorum (strain CIP 105476 / IBS 506).